Here is a 90-residue protein sequence, read N- to C-terminus: UPF0297 protein Swol_0469 (90 aa).

The protein belongs to the UPF0297 family.

This is UPF0297 protein Swol_0469 from Syntrophomonas wolfei subsp. wolfei (strain DSM 2245B / Goettingen).